The chain runs to 894 residues: Disease resistance protein SUMM2 (894 aa).

Residues 31 to 71 adopt a coiled-coil conformation; sequence ELSKNVVAMKKDMEVLKKKRDDVKRRVDIEEFTRRRERLSQ. The 304-residue stretch at 140–443 folds into the NB-ARC domain; sequence TLATPIARIE…CEGFIDENES (304 aa). 183–190 provides a ligand contact to ATP; that stretch reads GMGGVGKT. 7 LRR repeats span residues 517–538, 539–561, 564–586, 588–610, 611–633, 634–656, and 660–681; these read SVRRMSLMENEIEILSGSPECL, ELTTLFLQKNDSLLHISDEFFRC, MLVVLDLSGNSSLRKLPNQISKL, SLRYLDLSWTYIKRLPVGLQELK, KLRYLRLDYMKRLKSISGISNIS, SLRKLQLLQSKMSLDMSLVEELQ, and HLEVLNISIKSSLVVEKLLNAP.

Belongs to the disease resistance NB-LRR family. In terms of assembly, interacts with PAT1.

With respect to regulation, negatively regulated by the MEKK1-MKK1-MKK2-MPK4 kinase cascade. Its function is as follows. Disease resistance protein that mediates defense responses against the bacterial pathogen Pseudomonas syringae pv tomato strain DC3000, and the virulent oomycete Hyaloperonospora arabidopsidis isolate Noco2. Becomes active when the MEKK1-MKK1-MKK2-MPK4 kinase cascade is disrupted by the microbial effector hopAI1. Does not seem to be required for the activation of MPK4 by flg22, or flg22-induced up-regulation of PAD3. Functions downstream of MEKK2/SUMM1 in immune responses, including cell death and defense responses. The protein is Disease resistance protein SUMM2 of Arabidopsis thaliana (Mouse-ear cress).